The primary structure comprises 140 residues: Ribosome-binding factor A (140 aa).

The segment at 115 to 140 (EDERQQRGDIPPGSDQQPGSDEQPTG) is disordered. A compositionally biased stretch (polar residues) spans 128–140 (SDQQPGSDEQPTG).

Belongs to the RbfA family. As to quaternary structure, monomer. Binds 30S ribosomal subunits, but not 50S ribosomal subunits or 70S ribosomes.

It is found in the cytoplasm. One of several proteins that assist in the late maturation steps of the functional core of the 30S ribosomal subunit. Associates with free 30S ribosomal subunits (but not with 30S subunits that are part of 70S ribosomes or polysomes). Required for efficient processing of 16S rRNA. May interact with the 5'-terminal helix region of 16S rRNA. The protein is Ribosome-binding factor A of Synechococcus sp. (strain CC9605).